A 340-amino-acid chain; its full sequence is Phosphoribosylformylglycinamidine cyclo-ligase (340 aa).

The protein belongs to the AIR synthase family.

The protein localises to the cytoplasm. It carries out the reaction 2-formamido-N(1)-(5-O-phospho-beta-D-ribosyl)acetamidine + ATP = 5-amino-1-(5-phospho-beta-D-ribosyl)imidazole + ADP + phosphate + H(+). The protein operates within purine metabolism; IMP biosynthesis via de novo pathway; 5-amino-1-(5-phospho-D-ribosyl)imidazole from N(2)-formyl-N(1)-(5-phospho-D-ribosyl)glycinamide: step 2/2. The sequence is that of Phosphoribosylformylglycinamidine cyclo-ligase from Streptococcus pneumoniae (strain P1031).